Reading from the N-terminus, the 66-residue chain is Beta-mammal toxin Cv2 (66 aa).

The 66-residue stretch at 1–66 folds into the LCN-type CS-alpha/beta domain; it reads KEGYIVNHST…VWPLPKKTCN (66 aa). Intrachain disulfides connect C12–C65, C16–C41, C25–C46, and C29–C48.

In terms of tissue distribution, expressed by the venom gland.

Its subcellular location is the secreted. Its activity is regulated as follows. Is susceptible to be slightly neutralized by human antibodies scFvs 10FG2. In terms of biological role, beta toxins bind voltage-independently at site-4 of sodium channels (Nav) and reduces peak current and shifts the voltage of activation toward more negative potentials thereby affecting sodium channel activation and promoting spontaneous and repetitive firing. This toxin is slightly toxic to mice. In Centruroides villegasi (Scorpion), this protein is Beta-mammal toxin Cv2.